The following is a 61-amino-acid chain: Cobrotoxin-b (61 aa).

Cystine bridges form between cysteine 3–cysteine 23, cysteine 17–cysteine 40, cysteine 42–cysteine 53, and cysteine 54–cysteine 59.

It belongs to the three-finger toxin family. Short-chain subfamily. Type I alpha-neurotoxin sub-subfamily. In terms of tissue distribution, expressed by the venom gland.

Its subcellular location is the secreted. Functionally, produces peripheral paralysis by blocking neuromuscular transmission at the postsynaptic site. Binds to the nicotinic acetylcholine receptor. The protein is Cobrotoxin-b of Naja kaouthia (Monocled cobra).